The following is a 1043-amino-acid chain: Ras guanine nucleotide exchange factor S (1043 aa).

Positions 109 to 142 form a coiled coil; sequence IETLQTQRRQSTLNIQALQINNELQQQLQQQQQL. Low complexity-rich tracts occupy residues 135–145, 245–258, 266–281, and 293–307; these read QLQQQQQLPPI, LSPL…GLSS, SKNQ…NSSS, and NNNN…SNSS. 2 disordered regions span residues 135 to 160 and 245 to 316; these read QLQQ…TSTI and LSPL…HQSQ. Positions 404–434 form a coiled coil; that stretch reads LAVSLQNVEGLQNIAENLEDETLNLLDLVNE. The 124-residue stretch at 645 to 768 folds into the N-terminal Ras-GEF domain; it reads KDGSILKVTL…LLRGLLDKMI (124 aa). One can recognise a Ras-GEF domain in the interval 803–1043; that stretch reads SAQSIAQQLT…YDLSIALEPK (241 aa).

Its function is as follows. Promotes the exchange of Ras-bound GDP by GTP. This chain is Ras guanine nucleotide exchange factor S (gefS), found in Dictyostelium discoideum (Social amoeba).